The primary structure comprises 659 residues: Threonine--tRNA ligase (659 aa).

Residues Met1 to Arg61 enclose the TGS domain. A catalytic region spans residues Asp249–Pro541. Residues Cys341, His392, and His518 each contribute to the Zn(2+) site. Residues Glu637–Ala659 form a disordered region.

Belongs to the class-II aminoacyl-tRNA synthetase family. Homodimer. The cofactor is Zn(2+).

It localises to the cytoplasm. The catalysed reaction is tRNA(Thr) + L-threonine + ATP = L-threonyl-tRNA(Thr) + AMP + diphosphate + H(+). Its function is as follows. Catalyzes the attachment of threonine to tRNA(Thr) in a two-step reaction: L-threonine is first activated by ATP to form Thr-AMP and then transferred to the acceptor end of tRNA(Thr). Also edits incorrectly charged L-seryl-tRNA(Thr). The protein is Threonine--tRNA ligase of Caulobacter sp. (strain K31).